Consider the following 251-residue polypeptide: 1-(5-phosphoribosyl)-5-[(5-phosphoribosylamino)methylideneamino] imidazole-4-carboxamide isomerase (251 aa).

Asp8 functions as the Proton acceptor in the catalytic mechanism. Residue Asp131 is the Proton donor of the active site.

This sequence belongs to the HisA/HisF family.

Its subcellular location is the cytoplasm. It catalyses the reaction 1-(5-phospho-beta-D-ribosyl)-5-[(5-phospho-beta-D-ribosylamino)methylideneamino]imidazole-4-carboxamide = 5-[(5-phospho-1-deoxy-D-ribulos-1-ylimino)methylamino]-1-(5-phospho-beta-D-ribosyl)imidazole-4-carboxamide. Its pathway is amino-acid biosynthesis; L-histidine biosynthesis; L-histidine from 5-phospho-alpha-D-ribose 1-diphosphate: step 4/9. In Burkholderia thailandensis (strain ATCC 700388 / DSM 13276 / CCUG 48851 / CIP 106301 / E264), this protein is 1-(5-phosphoribosyl)-5-[(5-phosphoribosylamino)methylideneamino] imidazole-4-carboxamide isomerase.